The sequence spans 96 residues: Small ribosomal subunit protein bS6 (96 aa).

Belongs to the bacterial ribosomal protein bS6 family.

In terms of biological role, binds together with bS18 to 16S ribosomal RNA. The protein is Small ribosomal subunit protein bS6 of Streptococcus equi subsp. equi (strain 4047).